Reading from the N-terminus, the 199-residue chain is MEKFETVNGVAVPFRRSNVDTDQIIPAVFLKRVTKTGFDDALFHAWRQDPGFILNQEAYQGATVLIAGPDFGTGSSREHAVWALRDYGFRVVLSPRFADIFRGNSGKQGLLTGVISEEDAERLWGAIEAQPGITATVDLVAKTATVGEVQVSFDIDHYTRWRLLEGLDDIALTLRDEVRISEYEAARARWRPKTLPVKL.

Belongs to the LeuD family. LeuD type 1 subfamily. Heterodimer of LeuC and LeuD.

It carries out the reaction (2R,3S)-3-isopropylmalate = (2S)-2-isopropylmalate. The protein operates within amino-acid biosynthesis; L-leucine biosynthesis; L-leucine from 3-methyl-2-oxobutanoate: step 2/4. Catalyzes the isomerization between 2-isopropylmalate and 3-isopropylmalate, via the formation of 2-isopropylmaleate. The protein is 3-isopropylmalate dehydratase small subunit of Leifsonia xyli subsp. xyli (strain CTCB07).